Reading from the N-terminus, the 159-residue chain is Probable E3 ubiquitin-protein ligase RHA1A (159 aa).

Residues 86-130 (CTVCLSDFESDDKVRQLPKCGHVFHHYCLDRWIVDYNKMKCPVCR) form an RING-type; atypical zinc finger.

As to expression, predominantly expressed in stems.

It carries out the reaction S-ubiquitinyl-[E2 ubiquitin-conjugating enzyme]-L-cysteine + [acceptor protein]-L-lysine = [E2 ubiquitin-conjugating enzyme]-L-cysteine + N(6)-ubiquitinyl-[acceptor protein]-L-lysine.. Its pathway is protein modification; protein ubiquitination. Probable E3 ubiquitin-protein ligase that may possess E3 ubiquitin ligase activity in vitro. This Arabidopsis thaliana (Mouse-ear cress) protein is Probable E3 ubiquitin-protein ligase RHA1A.